The chain runs to 153 residues: Superoxide dismutase [Cu-Zn] (153 aa).

Cu cation contacts are provided by His-45, His-47, and His-62. The cysteines at positions 56 and 145 are disulfide-linked. Zn(2+) is bound by residues His-62, His-70, His-79, and Asp-82. His-119 contacts Cu cation.

It belongs to the Cu-Zn superoxide dismutase family. Homodimer. It depends on Cu cation as a cofactor. The cofactor is Zn(2+).

Its subcellular location is the cytoplasm. It carries out the reaction 2 superoxide + 2 H(+) = H2O2 + O2. Functionally, destroys radicals which are normally produced within the cells and which are toxic to biological systems. This is Superoxide dismutase [Cu-Zn] (Sod) from Chymomyza amoena.